The following is a 211-amino-acid chain: External core antigen (211 aa).

Residues 1–19 form the signal peptide; that stretch reads MHLFHLCLIILCSCPTVQA. Positions 25–27 are HBEAG; that stretch reads GWL. The tract at residues 165-211 is disordered; it reads NAPILSTLPETTVVRRRRPSGRRTPSPRRRRSQSPRRRRSQSPASSC. Residues 178–204 are compositionally biased toward basic residues; that stretch reads VRRRRPSGRRTPSPRRRRSQSPRRRRS. One copy of the 1; half-length repeat lies at 183 to 189; that stretch reads PSGRRTP. The segment at 183 to 205 is 3 X 8 AA repeats of S-P-R-R-R-R-S-Q; it reads PSGRRTPSPRRRRSQSPRRRRSQ. Residues 183–211 constitute a propeptide that is removed on maturation; that stretch reads PSGRRTPSPRRRRSQSPRRRRSQSPASSC. 2 consecutive repeat copies span residues 190 to 197 and 198 to 205.

Belongs to the orthohepadnavirus precore antigen family. Homodimerizes. Post-translationally, phosphorylated. Cleaved by host furin.

Its subcellular location is the secreted. The protein resides in the host nucleus. In terms of biological role, may regulate immune response to the intracellular capsid in acting as a T-cell tolerogen, by having an immunoregulatory effect which prevents destruction of infected cells by cytotoxic T-cells. This immune regulation may predispose to chronicity during perinatal infections and prevent severe liver injury during adult infections. In Woolly monkey hepatitis B virus (isolate Louisville) (WMHBV), this protein is External core antigen.